Here is a 330-residue protein sequence, read N- to C-terminus: Methionyl-tRNA formyltransferase (330 aa).

112 to 115 contacts (6S)-5,6,7,8-tetrahydrofolate; sequence SLLP.

The protein belongs to the Fmt family.

The catalysed reaction is L-methionyl-tRNA(fMet) + (6R)-10-formyltetrahydrofolate = N-formyl-L-methionyl-tRNA(fMet) + (6S)-5,6,7,8-tetrahydrofolate + H(+). Its function is as follows. Attaches a formyl group to the free amino group of methionyl-tRNA(fMet). The formyl group appears to play a dual role in the initiator identity of N-formylmethionyl-tRNA by promoting its recognition by IF2 and preventing the misappropriation of this tRNA by the elongation apparatus. This Synechocystis sp. (strain ATCC 27184 / PCC 6803 / Kazusa) protein is Methionyl-tRNA formyltransferase.